A 539-amino-acid polypeptide reads, in one-letter code: Protein Wnt-4 (539 aa).

The signal sequence occupies residues 1–21 (MPSPTGVFVLMILTHLSFGLG). The segment at 34 to 77 (QNGDLDSSNPAIHHQQHQQHQQHQQHQQHQSNHNLNNGNMNSTI) is disordered. Positions 51–74 (QQHQQHQQHQQHQSNHNLNNGNMN) are enriched in low complexity. Asn-74 and Asn-284 each carry an N-linked (GlcNAc...) asparagine glycan. 5 disulfide bridges follow: Cys-274–Cys-285, Cys-322–Cys-330, Cys-332–Cys-349, Cys-397–Cys-411, and Cys-399–Cys-406. Residue Ser-403 is the site of O-palmitoleoyl serine; by PORCN attachment. Asn-419 carries an N-linked (GlcNAc...) asparagine glycan. The segment at 436–463 (APNQRSMRQVSSSRMKKPKQRRKKPQQS) is disordered. Residues 439-448 (QRSMRQVSSS) are compositionally biased toward low complexity. The segment covering 449-460 (RMKKPKQRRKKP) has biased composition (basic residues). Intrachain disulfides connect Cys-478–Cys-497, Cys-486–Cys-492, Cys-496–Cys-538, Cys-512–Cys-529, Cys-514–Cys-526, and Cys-521–Cys-522.

The protein belongs to the Wnt family. Post-translationally, palmitoleoylated by porcupine. The lipid group functions as a sorting signal, targeting the ligand to polarized vesicles that transport Wnt4 to unique sites at the cell surface. Depalmitoleoylated by notum, leading to inhibit Wnt signaling pathway.

It is found in the secreted. The protein resides in the extracellular space. The protein localises to the extracellular matrix. Its function is as follows. Binds as a ligand to a family of frizzled seven-transmembrane receptors and acts through a cascade of genes on the nucleus. Acts downstream of homeotic complex genes in the visceral mesoderm and is required for embryonic segmentation. Also required for cell movement and FAK regulation during ovarian morphogenesis. The sequence is that of Protein Wnt-4 (Wnt4) from Drosophila melanogaster (Fruit fly).